The primary structure comprises 271 residues: 4-hydroxy-tetrahydrodipicolinate reductase (271 aa).

8-13 contributes to the NAD(+) binding site; the sequence is GITGRM. Arginine 35 contacts NADP(+). NAD(+) is bound by residues 100–102 and 124–127; these read GST and APNM. The active-site Proton donor/acceptor is the histidine 157. Position 158 (histidine 158) interacts with (S)-2,3,4,5-tetrahydrodipicolinate. The active-site Proton donor is lysine 161. 167-168 lines the (S)-2,3,4,5-tetrahydrodipicolinate pocket; the sequence is GT.

This sequence belongs to the DapB family.

It localises to the cytoplasm. It catalyses the reaction (S)-2,3,4,5-tetrahydrodipicolinate + NAD(+) + H2O = (2S,4S)-4-hydroxy-2,3,4,5-tetrahydrodipicolinate + NADH + H(+). It carries out the reaction (S)-2,3,4,5-tetrahydrodipicolinate + NADP(+) + H2O = (2S,4S)-4-hydroxy-2,3,4,5-tetrahydrodipicolinate + NADPH + H(+). Its pathway is amino-acid biosynthesis; L-lysine biosynthesis via DAP pathway; (S)-tetrahydrodipicolinate from L-aspartate: step 4/4. Functionally, catalyzes the conversion of 4-hydroxy-tetrahydrodipicolinate (HTPA) to tetrahydrodipicolinate. This is 4-hydroxy-tetrahydrodipicolinate reductase from Myxococcus xanthus (strain DK1622).